We begin with the raw amino-acid sequence, 635 residues long: MADASAGGLYQCLTDISRADTSGDYQKALTSANKLIRKYPKETFAFKCKLVAQIQLSQYADALELIRKTPAHQMGHVGFEKAYIHYRQDELDEAIKELNTCDKDDVKALELKAQVFYKQENYQQAYDIYLYLLKNHSDDSDELRRANFLAVQARLEAQGVKQAVAETEDSYSQLYNRACVEIEAEKLPQALESLEKALKTCRKSFEDEDREEDEIEEELDSIRVQKAYVLQRMGQKAEALAIYEKVQAANHPDSSVKATITNNIPAASSDFALPESRKRFKAALQIDQTKLTRRQRLTLMLNNALVLLLSNQREPCKRALEELVAKFGSSKDVALIEATLHFKMGDAEAALKVLAGSDLEQSLARLHVLLNAGRLPEAVGAIRDLPISGKLGASSLLTSTLIAADSRDEAVKELVAASTAKNQTPEALKSILEDLVEVEQQRGNETAATKHLEKLVEKFPEDLQLQCRLVGAYSKTDPKKAESLSAKLFPETMEVDVNVDELEDSDWILYGEKYRQKKEAKSPQTAEIAATRKLKIATKRKRKIRLPKNYNSAVTPDPERWLPRQERSTYKRKRKNREREIGRGTQGSSSANPNVEYVTASPNSPRPLPGPVAEGPRQQRPNFQKQKKKKNASKF.

TPR repeat units follow at residues 7 to 42 (GGLY…YPKE), 75 to 105 (GHVG…DKDD), 106 to 139 (VKAL…HSDD), 171 to 204 (YSQL…CRKS), 220 to 253 (DSIR…NHPD), 255 to 290 (SVKA…DQTK), and 436 to 469 (VEVE…QCRL). The interval 539–635 (KRKRKIRLPK…QKKKKNASKF (97 aa)) is disordered. Over residues 557-569 (DPERWLPRQERST) the composition is skewed to basic and acidic residues. Residues 625–635 (KQKKKKNASKF) are compositionally biased toward basic residues.

It belongs to the SRP72 family. As to quaternary structure, heterodimer with srpa-68. Srpa-68-srpa-72 heterodimer formation is stabilized by the presence of 7SL RNA. Component of a signal recognition particle (SRP) complex that consists of a 7SL RNA molecule of 300 nucleotides and six protein subunits: srpa-72, srpa-68, SRP54, F37F2.2/SRP19, F25G6.8/SRP14 and ZK512.4/SRP9. Within the SRP complex, interacts (via N-terminus) with srpa-68 (via C-terminus).

It is found in the cytoplasm. It localises to the endoplasmic reticulum. Functionally, component of the signal recognition particle (SRP) complex, a ribonucleoprotein complex that mediates the cotranslational targeting of secretory and membrane proteins to the endoplasmic reticulum (ER). The SRP complex interacts with the signal sequence in nascent secretory and membrane proteins and directs them to the membrane of the ER. The SRP complex targets the ribosome-nascent chain complex to the SRP receptor (SR), which is anchored in the ER, where SR compaction and GTPase rearrangement drive cotranslational protein translocation into the ER. Binds the signal recognition particle RNA (7SL RNA) in presence of srpa-68. Can bind 7SL RNA with low affinity. The SRP complex possibly participates in the elongation arrest function. This Caenorhabditis elegans protein is Signal recognition particle subunit SRP72.